The chain runs to 199 residues: NAD(P)H dehydrogenase (quinone) (199 aa).

In terms of domain architecture, Flavodoxin-like spans 4-190; that stretch reads VLVLYYSSYG…TGARYQGRKI (187 aa). FMN is bound by residues 10–15 and 78–80; these read SSYGHL and TRF. Tyr-12 contributes to the NAD(+) binding site. Trp-98 is a substrate binding site. Residues 113 to 119 and His-134 contribute to the FMN site; that span reads STATQHG.

This sequence belongs to the WrbA family. Requires FMN as cofactor.

It carries out the reaction a quinone + NADH + H(+) = a quinol + NAD(+). The enzyme catalyses a quinone + NADPH + H(+) = a quinol + NADP(+). The protein is NAD(P)H dehydrogenase (quinone) of Caulobacter vibrioides (strain ATCC 19089 / CIP 103742 / CB 15) (Caulobacter crescentus).